Here is a 510-residue protein sequence, read N- to C-terminus: NAD(P)H-quinone oxidoreductase subunit 2 B, chloroplastic (510 aa).

The next 13 membrane-spanning stretches (helical) occupy residues 24-44, 57-77, 99-119, 124-144, 149-169, 183-203, 227-247, 295-315, 323-343, 354-374, 395-415, 428-448, and 484-504; these read LLLF…GLIL, LPWF…ALLF, IFQF…VEYI, MAIT…MFLC, LITI…LSGY, YLLM…WLYG, PGIS…LSPA, WHLL…IIAI, MLAY…IVGD, YMLF…LFGL, ALSL…AGFF, GLYS…YYYL, and MIVC…IIAI.

This sequence belongs to the complex I subunit 2 family. NDH is composed of at least 16 different subunits, 5 of which are encoded in the nucleus.

The protein resides in the plastid. The protein localises to the chloroplast thylakoid membrane. It catalyses the reaction a plastoquinone + NADH + (n+1) H(+)(in) = a plastoquinol + NAD(+) + n H(+)(out). It carries out the reaction a plastoquinone + NADPH + (n+1) H(+)(in) = a plastoquinol + NADP(+) + n H(+)(out). Functionally, NDH shuttles electrons from NAD(P)H:plastoquinone, via FMN and iron-sulfur (Fe-S) centers, to quinones in the photosynthetic chain and possibly in a chloroplast respiratory chain. The immediate electron acceptor for the enzyme in this species is believed to be plastoquinone. Couples the redox reaction to proton translocation, and thus conserves the redox energy in a proton gradient. The chain is NAD(P)H-quinone oxidoreductase subunit 2 B, chloroplastic from Jasminum nudiflorum (Winter jasmine).